A 228-amino-acid polypeptide reads, in one-letter code: Protein JAZ7 (228 aa).

Residues 101–136 enclose the Tify domain; sequence LSPNESTLTIFYMGEVHIFPGISPEKAELIIDLVSK. The short motif at 176-199 is the Jas element; sequence MARRATLARFLEKRKHRLIKARPY. A Nuclear localization signal motif is present at residues 177-184; the sequence is ARRATLAR.

Belongs to the TIFY/JAZ family. As to quaternary structure, interacts with MYC2 (via N-terminus). JAZ7 competes with MED25 for binding to MYC2. Interacts with MTB1 (via N-terminus).

It localises to the nucleus. In terms of biological role, repressor of jasmonate responses. The chain is Protein JAZ7 from Solanum lycopersicum (Tomato).